The chain runs to 386 residues: Patatin (386 aa).

The signal sequence occupies residues 1-23; it reads MATTKSFLILFFMILATTSSTCA. Residues 32 to 229 form the PNPLA domain; sequence LSIDGGGIKG…TVGDPALLSL (198 aa). Residues 36–41 carry the GXGXXG motif; sequence GGGIKG. Residues 75–79 carry the GXSXG motif; the sequence is GTSTG. S77 acts as the Nucleophile in catalysis. N-linked (GlcNAc...) asparagine glycosylation is present at N115. Catalysis depends on D215, which acts as the Proton acceptor. Residues 215–217 carry the DGA/G motif; it reads DGA.

This sequence belongs to the patatin family.

It is found in the vacuole. Functionally, probable lipolytic acyl hydrolase (LAH), an activity which is thought to be involved in the response of tubers to pathogens. This Solanum tuberosum (Potato) protein is Patatin.